Consider the following 336-residue polypeptide: tRNA N6-adenosine threonylcarbamoyltransferase (336 aa).

2 residues coordinate Fe cation: His-114 and His-118. Substrate contacts are provided by residues Leu-136 to Gly-140, Asp-169, Gly-182, Asp-186, and Asn-275. Fe cation is bound at residue Asp-301.

The protein belongs to the KAE1 / TsaD family. Fe(2+) serves as cofactor.

Its subcellular location is the cytoplasm. It carries out the reaction L-threonylcarbamoyladenylate + adenosine(37) in tRNA = N(6)-L-threonylcarbamoyladenosine(37) in tRNA + AMP + H(+). In terms of biological role, required for the formation of a threonylcarbamoyl group on adenosine at position 37 (t(6)A37) in tRNAs that read codons beginning with adenine. Is involved in the transfer of the threonylcarbamoyl moiety of threonylcarbamoyl-AMP (TC-AMP) to the N6 group of A37, together with TsaE and TsaB. TsaD likely plays a direct catalytic role in this reaction. The protein is tRNA N6-adenosine threonylcarbamoyltransferase of Streptococcus pneumoniae (strain P1031).